The sequence spans 154 residues: CASP-like protein 5B3 (154 aa).

The Cytoplasmic portion of the chain corresponds to 1-17 (MKDVVGSPGTWSGMSLR). The helical transmembrane segment at 18–38 (VSQCVFAGASVVAMASAYGFS) threads the bilayer. Asparagine 39 carries N-linked (GlcNAc...) asparagine glycosylation. Residues 39-42 (NYTA) are Extracellular-facing. A helical transmembrane segment spans residues 43-63 (FCYLIASMGLQLLWSFGLACL). At 64–77 (DIYSLQTKRDLHNP) the chain is on the cytoplasmic side. The helical transmembrane segment at 78–98 (VLVSLFVVGDWVTAILSFAAA) threads the bilayer. Topologically, residues 99 to 129 (SASAGVTILFERDVHFCRMYPQLSCGRYELS) are extracellular. A helical membrane pass occupies residues 130-150 (VILAFITWSFIATSAVSMFWL). Over 151-154 (LASL) the chain is Cytoplasmic.

It belongs to the Casparian strip membrane proteins (CASP) family. Homodimer and heterodimers.

The protein localises to the cell membrane. This is CASP-like protein 5B3 from Oryza sativa subsp. indica (Rice).